The chain runs to 597 residues: Membrane protein insertase YidC (597 aa).

The helical transmembrane segment at 8–28 threads the bilayer; it reads YFVAIALSVLILIAWQFFYVS. The disordered stretch occupies residues 38 to 75; it reads AEKAQQAQSQPGTQQAAPGQAAPGQALPGGAIPSAAES. The segment covering 41 to 70 has biased composition (low complexity); the sequence is AQQAQSQPGTQQAAPGQAAPGQALPGGAIP. The next 4 membrane-spanning stretches (helical) occupy residues 372-392, 446-466, 491-511, and 535-555; these read LFGNFGIAILITTIVVKLIFF, WPILIQIPVFFALYKVIYVTI, LFGLLPFEGPAFLHLGIWPIV, and FTWMPVVFTFMLASFPAGLVI.

This sequence belongs to the OXA1/ALB3/YidC family. Type 1 subfamily. As to quaternary structure, interacts with the Sec translocase complex via SecD. Specifically interacts with transmembrane segments of nascent integral membrane proteins during membrane integration.

It localises to the cell inner membrane. Functionally, required for the insertion and/or proper folding and/or complex formation of integral membrane proteins into the membrane. Involved in integration of membrane proteins that insert both dependently and independently of the Sec translocase complex, as well as at least some lipoproteins. Aids folding of multispanning membrane proteins. The protein is Membrane protein insertase YidC of Sinorhizobium medicae (strain WSM419) (Ensifer medicae).